A 317-amino-acid chain; its full sequence is Bile salt hydrolase/transferase (317 aa).

Cys-2 (nucleophile; acyl-thioester intermediate) is an active-site residue. Residues Cys-2 and Arg-18 each contribute to the deoxycholate site. Position 82 (Asn-82) interacts with taurine.

Belongs to the peptidase C59 family. As to quaternary structure, homotetramer. The tetramer consists of a dimer of dimers.

The catalysed reaction is glycocholate + H2O = cholate + glycine. It catalyses the reaction glycodeoxycholate + H2O = deoxycholate + glycine. The enzyme catalyses chenodeoxycholate + glycine = glycochenodeoxycholate + H2O. It carries out the reaction cholate + taurine = taurocholate + H2O. The catalysed reaction is taurodeoxycholate + H2O = deoxycholate + taurine. It catalyses the reaction taurochenodeoxycholate + H2O = chenodeoxycholate + taurine. The enzyme catalyses an L-alpha-amino acid + cholate = an N-choloyl-L-alpha-amino acid + H2O. It carries out the reaction an L-alpha-amino acid + taurocholate = an N-choloyl-L-alpha-amino acid + taurine. The catalysed reaction is cholate + L-alanine = L-alanocholate + H2O. It catalyses the reaction taurocholate + L-alanine = L-alanocholate + taurine. The enzyme catalyses cholate + L-serine = L-serocholate + H2O. It carries out the reaction taurocholate + L-serine = L-serocholate + taurine. The catalysed reaction is cholate + L-histidine = L-histidocholate + H2O. It catalyses the reaction taurocholate + L-histidine = L-histidocholate + taurine. The protein operates within lipid metabolism; bile acid biosynthesis. Hydrolase activity is competitively inhibited by the products cholate (CA) and deoxycholate (DCA), and by phenylacetate and 4-aminophenylacetate. Penicillin V and penicillin G show mixed inhibition. Strongly inhibited by thiol enzyme inhibitors in vitro. In terms of biological role, possesses dual functions in bile acid metabolism. Acts as a bile salt hydrolase that catalyzes the deconjugation of glycine- and taurine-linked bile salts, which occurs naturally in the intestines of humans, releasing amino acid residues and deconjugated bile salts (bile acids). Can hydrolyze the amide bond in all six major human conjugated bile salts, namely glycocholate (GCA), glycodeoxycholate (GDCA), glycochenodeoxycholate (GCDCA), taurocholate (TCA), taurodeoxycholate (TDCA) and taurochenodeoxycholate (TCDCA). Shows a slight preference for glycine-conjugated bile acids as substrates. Also acts as an amine N-acyltransferase that conjugates a wide variety of amino acids to conjugated and non-conjugated bile acids, thus producing bacterial bile acid amidates (BBAAs) - also named microbially conjugated bile acids (MCBAs) - in the gastrointestinal tract. These BBAAs may facilitate communication between the microbiota and host through the activation of human ligand-activated transcription factors. Is totally inactive toward penicillin V. This chain is Bile salt hydrolase/transferase, found in Bifidobacterium longum.